A 205-amino-acid polypeptide reads, in one-letter code: Guanylate kinase (205 aa).

In terms of domain architecture, Guanylate kinase-like spans 6–184 (GLLIVLSGPA…AVERIKAIVT (179 aa)). Residue 13–20 (GPAGVGKG) participates in ATP binding.

The protein belongs to the guanylate kinase family.

It localises to the cytoplasm. It carries out the reaction GMP + ATP = GDP + ADP. Functionally, essential for recycling GMP and indirectly, cGMP. This chain is Guanylate kinase, found in Shouchella clausii (strain KSM-K16) (Alkalihalobacillus clausii).